The primary structure comprises 430 residues: Enolase (430 aa).

Position 167 (Q167) interacts with (2R)-2-phosphoglycerate. The Proton donor role is filled by E209. Positions 246, 287, and 314 each coordinate Mg(2+). Residues K339, R368, S369, and K390 each contribute to the (2R)-2-phosphoglycerate site. Residue K339 is the Proton acceptor of the active site.

This sequence belongs to the enolase family. Mg(2+) serves as cofactor.

It localises to the cytoplasm. The protein resides in the secreted. Its subcellular location is the cell surface. It catalyses the reaction (2R)-2-phosphoglycerate = phosphoenolpyruvate + H2O. It functions in the pathway carbohydrate degradation; glycolysis; pyruvate from D-glyceraldehyde 3-phosphate: step 4/5. Catalyzes the reversible conversion of 2-phosphoglycerate (2-PG) into phosphoenolpyruvate (PEP). It is essential for the degradation of carbohydrates via glycolysis. This chain is Enolase, found in Prochlorococcus marinus (strain AS9601).